Consider the following 446-residue polypeptide: N-succinylarginine dihydrolase (446 aa).

Residues 19–28 (AGLSFGNVAS), N110, and 137–138 (HR) each bind substrate. E174 is a catalytic residue. Position 213 (R213) interacts with substrate. H249 is an active-site residue. Substrate is bound by residues D251 and N364. C370 acts as the Nucleophile in catalysis.

The protein belongs to the succinylarginine dihydrolase family. In terms of assembly, homodimer.

The enzyme catalyses N(2)-succinyl-L-arginine + 2 H2O + 2 H(+) = N(2)-succinyl-L-ornithine + 2 NH4(+) + CO2. It functions in the pathway amino-acid degradation; L-arginine degradation via AST pathway; L-glutamate and succinate from L-arginine: step 2/5. Functionally, catalyzes the hydrolysis of N(2)-succinylarginine into N(2)-succinylornithine, ammonia and CO(2). This is N-succinylarginine dihydrolase from Burkholderia pseudomallei (strain 668).